Here is a 263-residue protein sequence, read N- to C-terminus: NADH dehydrogenase [ubiquinone] iron-sulfur protein 3, mitochondrial (263 aa).

A mitochondrion-targeting transit peptide spans 1–35 (MVAAVARLWWRGLLGASALTRGAGRPSVLLLPVRR).

The protein belongs to the complex I 30 kDa subunit family. In terms of assembly, core subunit of respiratory chain NADH dehydrogenase (Complex I) which is composed of 45 different subunits. Interacts with NDUFAF3. Interacts with RAB5IF. Found in subcomplexes containing subunits NDUFS2, MT-ND1 and NDUFA13.

The protein localises to the mitochondrion inner membrane. It carries out the reaction a ubiquinone + NADH + 5 H(+)(in) = a ubiquinol + NAD(+) + 4 H(+)(out). Its function is as follows. Core subunit of the mitochondrial membrane respiratory chain NADH dehydrogenase (Complex I) which catalyzes electron transfer from NADH through the respiratory chain, using ubiquinone as an electron acceptor. Essential for the catalytic activity and assembly of complex I. The sequence is that of NADH dehydrogenase [ubiquinone] iron-sulfur protein 3, mitochondrial (NDUFS3) from Gorilla gorilla gorilla (Western lowland gorilla).